A 372-amino-acid polypeptide reads, in one-letter code: Bifunctional enzyme IspD/IspF (372 aa).

A 2-C-methyl-D-erythritol 4-phosphate cytidylyltransferase region spans residues 1-210; the sequence is MLDLSLIMLG…LNLNSPSNDI (210 aa). Positions 211-372 are 2-C-methyl-D-erythritol 2,4-cyclodiphosphate synthase; that stretch reads FCGNGFDVHA…LKYFNWRNVL (162 aa). Aspartate 217 and histidine 219 together coordinate a divalent metal cation. 4-CDP-2-C-methyl-D-erythritol 2-phosphate is bound by residues 217–219 and 243–244; these read DVH and HS. Histidine 251 lines the a divalent metal cation pocket. 4-CDP-2-C-methyl-D-erythritol 2-phosphate contacts are provided by residues 265-267, 270-274, 341-344, phenylalanine 348, and arginine 351; these read DIG, YPDND, and TTTE.

The protein in the N-terminal section; belongs to the IspD/TarI cytidylyltransferase family. IspD subfamily. This sequence in the C-terminal section; belongs to the IspF family. The cofactor is a divalent metal cation.

The enzyme catalyses 2-C-methyl-D-erythritol 4-phosphate + CTP + H(+) = 4-CDP-2-C-methyl-D-erythritol + diphosphate. It catalyses the reaction 4-CDP-2-C-methyl-D-erythritol 2-phosphate = 2-C-methyl-D-erythritol 2,4-cyclic diphosphate + CMP. It participates in isoprenoid biosynthesis; isopentenyl diphosphate biosynthesis via DXP pathway; isopentenyl diphosphate from 1-deoxy-D-xylulose 5-phosphate: step 2/6. It functions in the pathway isoprenoid biosynthesis; isopentenyl diphosphate biosynthesis via DXP pathway; isopentenyl diphosphate from 1-deoxy-D-xylulose 5-phosphate: step 4/6. Its function is as follows. Bifunctional enzyme that catalyzes the formation of 4-diphosphocytidyl-2-C-methyl-D-erythritol from CTP and 2-C-methyl-D-erythritol 4-phosphate (MEP) (IspD), and catalyzes the conversion of 4-diphosphocytidyl-2-C-methyl-D-erythritol 2-phosphate (CDP-ME2P) to 2-C-methyl-D-erythritol 2,4-cyclodiphosphate (ME-CPP) with a corresponding release of cytidine 5-monophosphate (CMP) (IspF). This Campylobacter fetus subsp. fetus (strain 82-40) protein is Bifunctional enzyme IspD/IspF.